Here is a 153-residue protein sequence, read N- to C-terminus: MHNKTVRHLTILILTIAGIFIIDQNIKSLFVDGYRYYSDCIDLILVYNKGVAFSMFAFLDESLKYIQLVLVFGVFGYMLYLNQLCYAIPAGLMLGGAFSNIYDRFIHGGVVDMVYWHCGFDFAVFNFADVMIDVAVVWILLLNFKPKFCKNHS.

3 consecutive transmembrane segments (helical) span residues 11 to 31, 39 to 59, and 68 to 88; these read ILIL…SLFV, DCID…FAFL, and LVLV…CYAI. Catalysis depends on residues Asp-112 and Asp-129. A helical transmembrane segment spans residues 122–142; that stretch reads FAVFNFADVMIDVAVVWILLL.

Belongs to the peptidase A8 family.

It localises to the cell inner membrane. The catalysed reaction is Release of signal peptides from bacterial membrane prolipoproteins. Hydrolyzes -Xaa-Yaa-Zaa-|-(S,diacylglyceryl)Cys-, in which Xaa is hydrophobic (preferably Leu), and Yaa (Ala or Ser) and Zaa (Gly or Ala) have small, neutral side chains.. It participates in protein modification; lipoprotein biosynthesis (signal peptide cleavage). Functionally, this protein specifically catalyzes the removal of signal peptides from prolipoproteins. The protein is Lipoprotein signal peptidase of Sulfurimonas denitrificans (strain ATCC 33889 / DSM 1251) (Thiomicrospira denitrificans (strain ATCC 33889 / DSM 1251)).